A 257-amino-acid polypeptide reads, in one-letter code: uncharacterized protein (257 aa).

Residues 6 to 26 (IFWLNLAAIIIISIVVSGDMF) form a helical membrane-spanning segment.

It belongs to the staphylococcal tandem lipoprotein family.

Its subcellular location is the cell membrane. This is an uncharacterized protein from Staphylococcus aureus (strain COL).